The following is a 570-amino-acid chain: Proline--tRNA ligase (570 aa).

It belongs to the class-II aminoacyl-tRNA synthetase family. ProS type 1 subfamily. Homodimer.

The protein resides in the cytoplasm. It catalyses the reaction tRNA(Pro) + L-proline + ATP = L-prolyl-tRNA(Pro) + AMP + diphosphate. Catalyzes the attachment of proline to tRNA(Pro) in a two-step reaction: proline is first activated by ATP to form Pro-AMP and then transferred to the acceptor end of tRNA(Pro). As ProRS can inadvertently accommodate and process non-cognate amino acids such as alanine and cysteine, to avoid such errors it has two additional distinct editing activities against alanine. One activity is designated as 'pretransfer' editing and involves the tRNA(Pro)-independent hydrolysis of activated Ala-AMP. The other activity is designated 'posttransfer' editing and involves deacylation of mischarged Ala-tRNA(Pro). The misacylated Cys-tRNA(Pro) is not edited by ProRS. In Geobacter metallireducens (strain ATCC 53774 / DSM 7210 / GS-15), this protein is Proline--tRNA ligase.